Here is a 643-residue protein sequence, read N- to C-terminus: Phosphomethylpyrimidine synthase (643 aa).

Residues N221, M250, Y279, H315, 335–337, 376–379, and E415 each bind substrate; these read SRG and DGLR. H419 lines the Zn(2+) pocket. Y442 is a binding site for substrate. Residue H483 participates in Zn(2+) binding. 3 residues coordinate [4Fe-4S] cluster: C563, C566, and C571.

Belongs to the ThiC family. In terms of assembly, homodimer. [4Fe-4S] cluster serves as cofactor.

The catalysed reaction is 5-amino-1-(5-phospho-beta-D-ribosyl)imidazole + S-adenosyl-L-methionine = 4-amino-2-methyl-5-(phosphooxymethyl)pyrimidine + CO + 5'-deoxyadenosine + formate + L-methionine + 3 H(+). It functions in the pathway cofactor biosynthesis; thiamine diphosphate biosynthesis. Functionally, catalyzes the synthesis of the hydroxymethylpyrimidine phosphate (HMP-P) moiety of thiamine from aminoimidazole ribotide (AIR) in a radical S-adenosyl-L-methionine (SAM)-dependent reaction. The chain is Phosphomethylpyrimidine synthase from Nitrobacter hamburgensis (strain DSM 10229 / NCIMB 13809 / X14).